Here is a 102-residue protein sequence, read N- to C-terminus: uncharacterized protein (102 aa).

The disordered stretch occupies residues 79–102; the sequence is AELLHPSPAPMPPATHGRSAAPCS.

This is an uncharacterized protein from Homo sapiens (Human).